The primary structure comprises 223 residues: Mitochondrial cardiolipin hydrolase (223 aa).

Topologically, residues 1–6 are mitochondrial intermembrane; it reads MGCASS. Residues 7-24 traverse the membrane as a helical segment; that stretch reads KEEVALTPLSDVNAAKEV. Residues 25–223 are Cytoplasmic-facing; sequence ADLKAQVDQL…QFDKLWDMFK (199 aa). Residues 164–191 form the PLD phosphodiesterase domain; it reads TAAHMHHKFAIIDGRLLLNGSFNWTRQA. Active-site residues include His169, Lys171, and Asp176.

It belongs to the phospholipase D family. MitoPLD/Zucchini subfamily. In terms of assembly, homodimer.

It localises to the mitochondrion outer membrane. Its function is as follows. Plays a critical role in PIWI-interacting RNA (piRNA) biogenesis. piRNAs provide essential protection against the activity of mobile genetic elements. piRNA-mediated transposon silencing is thus critical for maintaining genome stability. Backbone-non-specific, single strand-specific nuclease, cleaving either RNA or DNA substrates with similar affinity. Produces 5' phosphate and 3' hydroxyl termini, suggesting it could directly participate in the processing of primary piRNA transcripts. Has been proposed to act as a cardiolipin hydrolase to generate phosphatidic acid at mitochondrial surface. Although it cannot be excluded that it can act as a phospholipase in some circumstances, this activity could not be confirmed. The protein is Mitochondrial cardiolipin hydrolase of Chlamydomonas reinhardtii (Chlamydomonas smithii).